The sequence spans 438 residues: ATP-dependent protease ATPase subunit HslU (438 aa).

ATP is bound by residues isoleucine 18, 60–65 (GVGKTE), aspartate 251, glutamate 316, and arginine 388.

Belongs to the ClpX chaperone family. HslU subfamily. A double ring-shaped homohexamer of HslV is capped on each side by a ring-shaped HslU homohexamer. The assembly of the HslU/HslV complex is dependent on binding of ATP.

It is found in the cytoplasm. Functionally, ATPase subunit of a proteasome-like degradation complex; this subunit has chaperone activity. The binding of ATP and its subsequent hydrolysis by HslU are essential for unfolding of protein substrates subsequently hydrolyzed by HslV. HslU recognizes the N-terminal part of its protein substrates and unfolds these before they are guided to HslV for hydrolysis. This Jannaschia sp. (strain CCS1) protein is ATP-dependent protease ATPase subunit HslU.